The chain runs to 376 residues: N-acetyldiaminopimelate deacetylase (376 aa).

The active site involves D70. E129 acts as the Proton acceptor in catalysis.

The protein belongs to the peptidase M20A family. N-acetyldiaminopimelate deacetylase subfamily.

It carries out the reaction N-acetyl-(2S,6S)-2,6-diaminopimelate + H2O = (2S,6S)-2,6-diaminopimelate + acetate. Its pathway is amino-acid biosynthesis; L-lysine biosynthesis via DAP pathway; LL-2,6-diaminopimelate from (S)-tetrahydrodipicolinate (acetylase route): step 3/3. In terms of biological role, catalyzes the conversion of N-acetyl-diaminopimelate to diaminopimelate and acetate. In Bacillus pumilus (strain SAFR-032), this protein is N-acetyldiaminopimelate deacetylase.